Reading from the N-terminus, the 309-residue chain is Taste receptor type 2 member 113 (309 aa).

At 1–10 the chain is on the extracellular side; sequence MVAVLQSTLP. Residues 11 to 31 form a helical membrane-spanning segment; that stretch reads IIFSMEFIMGTLGNGFIFLIV. Residues 32-55 lie on the Cytoplasmic side of the membrane; the sequence is CIDWVQRRKISLVDQIRTALAISR. Residues 56–76 form a helical membrane-spanning segment; sequence IALIWLIFLDWWVSVHYPALH. At 77–80 the chain is on the extracellular side; it reads ETGK. A helical transmembrane segment spans residues 81 to 101; sequence MLSTYLISWTVINHCNFWLTA. The Cytoplasmic segment spans residues 102 to 127; it reads NLSILYFLKIANFSNIIFLYLKFRSK. The helical transmembrane segment at 128–148 threads the bilayer; it reads NVVLVTLLVSLFFLFLNTVII. At 149–185 the chain is on the extracellular side; the sequence is KIFSDVCFDSVQRNVSQIFIMYNHEQICKFLSFTNPM. N-linked (GlcNAc...) asparagine glycosylation occurs at N162. A helical transmembrane segment spans residues 186 to 206; it reads FTFIPFVMSTVMFSLLIFSLW. Over 207-229 the chain is Cytoplasmic; it reads RHLKNMQHTAKGCRDISTTVHIR. Residues 230 to 250 form a helical membrane-spanning segment; it reads ALQTIIVSVVLYTIFFLSFFV. At 251 to 262 the chain is on the extracellular side; the sequence is KVWSFVSPERYL. Residues 263-283 form a helical membrane-spanning segment; it reads IFLFVWALGNAVFSAHPFVMI. Over 284–309 the chain is Cytoplasmic; the sequence is LVNRRLRLASLSLIFWLWYRFKNIEV.

This sequence belongs to the G-protein coupled receptor T2R family.

The protein resides in the membrane. In terms of biological role, putative taste receptor which may play a role in the perception of bitterness. The sequence is that of Taste receptor type 2 member 113 from Mus musculus (Mouse).